The sequence spans 212 residues: GTP cyclohydrolase 1 (212 aa).

3 residues coordinate Zn(2+): cysteine 103, histidine 106, and cysteine 174.

It belongs to the GTP cyclohydrolase I family. Toroid-shaped homodecamer, composed of two pentamers of five dimers.

The catalysed reaction is GTP + H2O = 7,8-dihydroneopterin 3'-triphosphate + formate + H(+). It participates in cofactor biosynthesis; 7,8-dihydroneopterin triphosphate biosynthesis; 7,8-dihydroneopterin triphosphate from GTP: step 1/1. This is GTP cyclohydrolase 1 from Caulobacter vibrioides (strain ATCC 19089 / CIP 103742 / CB 15) (Caulobacter crescentus).